The primary structure comprises 239 residues: Octanoyltransferase (239 aa).

Residues Asp-48–Thr-236 enclose the BPL/LPL catalytic domain. Substrate is bound by residues Arg-87 to His-94, Ala-167 to Gly-169, and Gly-180 to Ser-182. The Acyl-thioester intermediate role is filled by Cys-198.

The protein belongs to the LipB family.

The protein resides in the cytoplasm. The catalysed reaction is octanoyl-[ACP] + L-lysyl-[protein] = N(6)-octanoyl-L-lysyl-[protein] + holo-[ACP] + H(+). It functions in the pathway protein modification; protein lipoylation via endogenous pathway; protein N(6)-(lipoyl)lysine from octanoyl-[acyl-carrier-protein]: step 1/2. Its function is as follows. Catalyzes the transfer of endogenously produced octanoic acid from octanoyl-acyl-carrier-protein onto the lipoyl domains of lipoate-dependent enzymes. Lipoyl-ACP can also act as a substrate although octanoyl-ACP is likely to be the physiological substrate. In Rhizobium johnstonii (strain DSM 114642 / LMG 32736 / 3841) (Rhizobium leguminosarum bv. viciae), this protein is Octanoyltransferase.